The primary structure comprises 39 residues: MKFLSLAFVLGLLALANATPLNPGNVIINGDCRVCNVRA.

A signal peptide spans 1 to 18; it reads MKFLSLAFVLGLLALANA. Positions 19–23 are excised as a propeptide; sequence TPLNP. Cys-32 and Cys-35 are oxidised to a cystine.

Belongs to the bomanin family. As to expression, hemolymph (at protein level).

It localises to the secreted. Functionally, secreted immune-induced peptide induced by Toll signaling. Has a role in resistance bacterial and fungal infections. The strength of antimicrobial activity appears to correlate with the overall level of expression. Has no activity against the fungus C.glabrata in vitro. The protein is Bomanin Short 3 of Drosophila melanogaster (Fruit fly).